Reading from the N-terminus, the 410-residue chain is Lipoyl synthase, mitochondrial (410 aa).

A mitochondrion-targeting transit peptide spans 1–29; sequence MASTTVCSAARIRVASSQVLRSIANTRTY. Over residues 29–39 the composition is skewed to polar residues; that stretch reads YATTSPESSIP. Residues 29–49 form a disordered region; that stretch reads YATTSPESSIPETKPTAKRTP. 7 residues coordinate [4Fe-4S] cluster: Cys-129, Cys-134, Cys-140, Cys-160, Cys-164, Cys-167, and Ser-375. The Radical SAM core domain maps to 143–364; it reads GGSKAAATAT…KEKAMEMGFL (222 aa).

The protein belongs to the radical SAM superfamily. Lipoyl synthase family. [4Fe-4S] cluster serves as cofactor.

The protein resides in the mitochondrion. The catalysed reaction is [[Fe-S] cluster scaffold protein carrying a second [4Fe-4S](2+) cluster] + N(6)-octanoyl-L-lysyl-[protein] + 2 oxidized [2Fe-2S]-[ferredoxin] + 2 S-adenosyl-L-methionine + 4 H(+) = [[Fe-S] cluster scaffold protein] + N(6)-[(R)-dihydrolipoyl]-L-lysyl-[protein] + 4 Fe(3+) + 2 hydrogen sulfide + 2 5'-deoxyadenosine + 2 L-methionine + 2 reduced [2Fe-2S]-[ferredoxin]. The protein operates within protein modification; protein lipoylation via endogenous pathway; protein N(6)-(lipoyl)lysine from octanoyl-[acyl-carrier-protein]: step 2/2. Catalyzes the radical-mediated insertion of two sulfur atoms into the C-6 and C-8 positions of the octanoyl moiety bound to the lipoyl domains of lipoate-dependent enzymes, thereby converting the octanoylated domains into lipoylated derivatives. The polypeptide is Lipoyl synthase, mitochondrial (Arthroderma otae (strain ATCC MYA-4605 / CBS 113480) (Microsporum canis)).